Reading from the N-terminus, the 197-residue chain is Large ribosomal subunit protein bL25 (197 aa).

The protein belongs to the bacterial ribosomal protein bL25 family. CTC subfamily. Part of the 50S ribosomal subunit; part of the 5S rRNA/L5/L18/L25 subcomplex. Contacts the 5S rRNA. Binds to the 5S rRNA independently of L5 and L18.

Its function is as follows. This is one of the proteins that binds to the 5S RNA in the ribosome where it forms part of the central protuberance. The chain is Large ribosomal subunit protein bL25 from Lawsonia intracellularis (strain PHE/MN1-00).